A 275-amino-acid polypeptide reads, in one-letter code: MPIVRAKPTSPGRRFVEKVVHPHLYKGRPFAALLESKSKTGGRNNNGRITTRHIGGGHKQHYRIIDFKRTKDNIPATVERIEYDPNRTAHIALLKYADGERRYIIAAKKQAVGDTVMSGELSPIRPGNCLPLKNIPLGTVIHNIELKIGKGAQMARAAGASVQLLGRDGIYAILRLRSGETRRVHVNCRAVIGEVSNTENNLKSLGKAGASRWRGIRPSVRGVAMNPVDHPHGGGEGRNKGRHPTSPWGQKSKGLKTRNNKRTDSMIIRRRAKKK.

Positions 222–275 (GVAMNPVDHPHGGGEGRNKGRHPTSPWGQKSKGLKTRNNKRTDSMIIRRRAKKK) are disordered. Residues 229–239 (DHPHGGGEGRN) show a composition bias toward basic and acidic residues.

It belongs to the universal ribosomal protein uL2 family. Part of the 50S ribosomal subunit. Forms a bridge to the 30S subunit in the 70S ribosome.

In terms of biological role, one of the primary rRNA binding proteins. Required for association of the 30S and 50S subunits to form the 70S ribosome, for tRNA binding and peptide bond formation. It has been suggested to have peptidyltransferase activity; this is somewhat controversial. Makes several contacts with the 16S rRNA in the 70S ribosome. This chain is Large ribosomal subunit protein uL2, found in Psychrobacter arcticus (strain DSM 17307 / VKM B-2377 / 273-4).